Consider the following 451-residue polypeptide: Phosphoglucosamine mutase (451 aa).

S101 acts as the Phosphoserine intermediate in catalysis. Mg(2+) is bound by residues S101, D243, D245, and D247. Residue S101 is modified to Phosphoserine.

The protein belongs to the phosphohexose mutase family. Mg(2+) is required as a cofactor. In terms of processing, activated by phosphorylation.

The enzyme catalyses alpha-D-glucosamine 1-phosphate = D-glucosamine 6-phosphate. Its function is as follows. Catalyzes the conversion of glucosamine-6-phosphate to glucosamine-1-phosphate. The polypeptide is Phosphoglucosamine mutase (Geobacter metallireducens (strain ATCC 53774 / DSM 7210 / GS-15)).